A 103-amino-acid polypeptide reads, in one-letter code: Pyrimidine/purine nucleoside phosphorylase (103 aa).

It belongs to the nucleoside phosphorylase PpnP family.

The enzyme catalyses a purine D-ribonucleoside + phosphate = a purine nucleobase + alpha-D-ribose 1-phosphate. It carries out the reaction adenosine + phosphate = alpha-D-ribose 1-phosphate + adenine. It catalyses the reaction cytidine + phosphate = cytosine + alpha-D-ribose 1-phosphate. The catalysed reaction is guanosine + phosphate = alpha-D-ribose 1-phosphate + guanine. The enzyme catalyses inosine + phosphate = alpha-D-ribose 1-phosphate + hypoxanthine. It carries out the reaction thymidine + phosphate = 2-deoxy-alpha-D-ribose 1-phosphate + thymine. It catalyses the reaction uridine + phosphate = alpha-D-ribose 1-phosphate + uracil. The catalysed reaction is xanthosine + phosphate = alpha-D-ribose 1-phosphate + xanthine. Catalyzes the phosphorolysis of diverse nucleosides, yielding D-ribose 1-phosphate and the respective free bases. Can use uridine, adenosine, guanosine, cytidine, thymidine, inosine and xanthosine as substrates. Also catalyzes the reverse reactions. This is Pyrimidine/purine nucleoside phosphorylase from Citrifermentans bemidjiense (strain ATCC BAA-1014 / DSM 16622 / JCM 12645 / Bem) (Geobacter bemidjiensis).